A 266-amino-acid chain; its full sequence is Glucosamine-6-phosphate deaminase (266 aa).

Catalysis depends on Asp72, which acts as the Proton acceptor; for enolization step. Asp141 serves as the catalytic For ring-opening step. The Proton acceptor; for ring-opening step role is filled by His143. The active-site For ring-opening step is Glu148.

The protein belongs to the glucosamine/galactosamine-6-phosphate isomerase family. NagB subfamily. Homohexamer.

It catalyses the reaction alpha-D-glucosamine 6-phosphate + H2O = beta-D-fructose 6-phosphate + NH4(+). It participates in amino-sugar metabolism; N-acetylneuraminate degradation; D-fructose 6-phosphate from N-acetylneuraminate: step 5/5. Allosterically activated by N-acetylglucosamine 6-phosphate (GlcNAc6P). Functionally, catalyzes the reversible isomerization-deamination of glucosamine 6-phosphate (GlcN6P) to form fructose 6-phosphate (Fru6P) and ammonium ion. The polypeptide is Glucosamine-6-phosphate deaminase (Erwinia tasmaniensis (strain DSM 17950 / CFBP 7177 / CIP 109463 / NCPPB 4357 / Et1/99)).